The chain runs to 431 residues: Enolase (431 aa).

(2R)-2-phosphoglycerate is bound at residue Gln-163. The Proton donor role is filled by Glu-205. 3 residues coordinate Mg(2+): Asp-242, Glu-288, and Asp-315. 4 residues coordinate (2R)-2-phosphoglycerate: Lys-340, Arg-369, Ser-370, and Lys-391. The Proton acceptor role is filled by Lys-340.

It belongs to the enolase family. Mg(2+) is required as a cofactor.

It is found in the cytoplasm. The protein resides in the secreted. The protein localises to the cell surface. It carries out the reaction (2R)-2-phosphoglycerate = phosphoenolpyruvate + H2O. It functions in the pathway carbohydrate degradation; glycolysis; pyruvate from D-glyceraldehyde 3-phosphate: step 4/5. Functionally, catalyzes the reversible conversion of 2-phosphoglycerate (2-PG) into phosphoenolpyruvate (PEP). It is essential for the degradation of carbohydrates via glycolysis. This Latilactobacillus sakei subsp. sakei (strain 23K) (Lactobacillus sakei subsp. sakei) protein is Enolase.